The sequence spans 347 residues: Eukaryotic translation initiation factor 3 subunit I (347 aa).

WD repeat units follow at residues 8–49 (GHER…GTYE), 50–89 (GHNGTVWTVDVDSTSTLLVSGSADNQMRLWEVATGKCLFT), 146–186 (TFSG…PESG), 198–237 (AHTDVISDLQMSADRTYFVTSSRDKTSKLIDSKTLQVIKT), 239–278 (ATETPLNSASIHPTKPFVIVGGGQDAMNVTTTSARQGRFE), and 295–336 (GHFG…SKLY).

It belongs to the eIF-3 subunit I family. As to quaternary structure, component of the eukaryotic translation initiation factor 3 (eIF-3) complex.

It is found in the cytoplasm. Component of the eukaryotic translation initiation factor 3 (eIF-3) complex, which is involved in protein synthesis of a specialized repertoire of mRNAs and, together with other initiation factors, stimulates binding of mRNA and methionyl-tRNAi to the 40S ribosome. The eIF-3 complex specifically targets and initiates translation of a subset of mRNAs involved in cell proliferation. This chain is Eukaryotic translation initiation factor 3 subunit I, found in Mycosarcoma maydis (Corn smut fungus).